The following is a 238-amino-acid chain: Cysteine-rich venom protein 1 (238 aa).

The first 19 residues, 1–19 (MIAFIVLLSLAAVLQQSSG), serve as a signal peptide directing secretion. One can recognise an SCP domain in the interval 38-164 (VDKHNALRRS…STKYLYVCQY (127 aa)). 8 disulfides stabilise this stretch: C75–C153, C92–C165, C148–C162, C184–C191, C187–C196, C200–C233, C209–C227, and C218–C231. The region spanning 200–233 (CEYEDTFSNCKALAKKTKCKTEWIKSKCPATCFC) is the ShKT domain.

The protein belongs to the CRISP family. In terms of tissue distribution, expressed by the venom gland.

It localises to the secreted. Functionally, blocks contraction of smooth muscle elicited by high potassium-induced depolarization, but does not block caffeine-stimulated contraction. May target voltage-gated calcium channels on smooth muscle. The chain is Cysteine-rich venom protein 1 from Hydrophis hardwickii (Hardwick's spine-bellied seasnake).